Reading from the N-terminus, the 210-residue chain is uncharacterized protein (210 aa).

In terms of domain architecture, CS spans 2 to 91; it reads SRHPEVKWAQ…AEAKWWKKLV (90 aa). Residues 165 to 210 are disordered; it reads GMGGMGGMDEFEDESDDEEEVSKPQDAEKAAEAGKSQESDAKTETS. Over residues 173 to 184 the composition is skewed to acidic residues; it reads DEFEDESDDEEE. Positions 185–210 are enriched in basic and acidic residues; sequence VSKPQDAEKAAEAGKSQESDAKTETS.

This is an uncharacterized protein from Oryza sativa subsp. indica (Rice).